The following is a 77-amino-acid chain: UPF0291 protein OB1671 (77 aa).

The segment at D56–H77 is disordered. Positions P57–H77 are enriched in basic and acidic residues.

Belongs to the UPF0291 family.

It localises to the cytoplasm. The protein is UPF0291 protein OB1671 of Oceanobacillus iheyensis (strain DSM 14371 / CIP 107618 / JCM 11309 / KCTC 3954 / HTE831).